Consider the following 155-residue polypeptide: FUN14 domain-containing protein 1 (155 aa).

Topologically, residues 1–47 are cytoplasmic; the sequence is MASRNPPPQDYESDDESYEVLDLTEYARRHHWWNRVFGHSSGPMVEK. Residues serine 13 and serine 17 each carry the phosphoserine modification. At tyrosine 18 the chain carries Phosphotyrosine; by SRC. The short motif at 18 to 21 is the YXXL element; that stretch reads YEVL. A helical transmembrane segment spans residues 48 to 68; it reads YSVATQIVMGGVTGWCAGFLF. At 69-74 the chain is on the mitochondrial intermembrane side; it reads QKVGKL. A helical transmembrane segment spans residues 75–95; the sequence is AATAVGGGFLLLQVASHSGYV. The Cytoplasmic segment spans residues 96–133; sequence QIDWKRVEKDVNKAKRQIKKRANKAAPEINNIIEEATD. Lysine 119 is covalently cross-linked (Glycyl lysine isopeptide (Lys-Gly) (interchain with G-Cter in ubiquitin)). The chain crosses the membrane as a helical span at residues 134-154; sequence FIKQNIVISSGFVGGFLLGLA. Position 155 (serine 155) is a topological domain, mitochondrial intermembrane.

Belongs to the FUN14 family. As to quaternary structure, interacts (via YXXL motif) with MAP1 LC3 family proteins MAP1LC3A, MAP1LC3B and GABARAP. Interacts with DNM1L/DPR1. Interacts with GPX4. In terms of processing, phosphorylation at Ser-13 by CK2 and at Tyr-18 by SRC inhibits activation of mitophagy. Following hypoxia, dephosphorylated at Tyr-18, leading to interaction with MAP1 LC3 family proteins and triggering mitophagy. Dephosphorylation is mediated by PGAM5. Phosphorylated by ULK1 at Ser-17 which enhances FUNDC1 binding to LC3. Post-translationally, ubiquitinated on Lys-119. Deubiquitinated by USP19; leading to hypoxia-induced DRP1 oligomerization and GTPase activity.

It localises to the mitochondrion outer membrane. In terms of biological role, integral mitochondrial outer-membrane protein that mediates the formation of mitochondria-associated endoplasmic reticulum membranes (MAMs). In turn, mediates angiogenesis and neoangiogenesis through interference with intracellular Ca(2+) communication and regulation of the vascular endothelial growth factor receptor KDR/VEGFR2 expression at both mRNA and protein levels. Also acts as an activator of hypoxia-induced mitophagy, an important mechanism for mitochondrial quality and homeostasis, by interacting with and recruiting LC3 protein family to mitochondria. Mechanistically, recruits DRP1 at ER-mitochondria contact sites leading to DRP1 oligomerization and GTPase activity to facilitate mitochondrial fission during hypoxia. Additionally, plays a role in hepatic ferroptosis by interacting directly with glutathione peroxidase/GPX4 to facilitate its recruitment into mitochondria through TOM/TIM complex where it is degraded by mitophagy. The polypeptide is FUN14 domain-containing protein 1 (Fundc1) (Mus musculus (Mouse)).